The following is a 209-amino-acid chain: Uracil phosphoribosyltransferase (209 aa).

5-phospho-alpha-D-ribose 1-diphosphate-binding positions include Arg79, Arg104, and 131–139; that span reads DPMLATGGS. Residues Ile194 and 199 to 201 each bind uracil; that span reads GDA. 5-phospho-alpha-D-ribose 1-diphosphate is bound at residue Asp200.

It belongs to the UPRTase family. Mg(2+) is required as a cofactor.

It catalyses the reaction UMP + diphosphate = 5-phospho-alpha-D-ribose 1-diphosphate + uracil. It participates in pyrimidine metabolism; UMP biosynthesis via salvage pathway; UMP from uracil: step 1/1. With respect to regulation, allosterically activated by GTP. Functionally, catalyzes the conversion of uracil and 5-phospho-alpha-D-ribose 1-diphosphate (PRPP) to UMP and diphosphate. This Clostridioides difficile (strain 630) (Peptoclostridium difficile) protein is Uracil phosphoribosyltransferase.